We begin with the raw amino-acid sequence, 73 residues long: UPF0346 protein SAS1364 (73 aa).

Belongs to the UPF0346 family.

The polypeptide is UPF0346 protein SAS1364 (Staphylococcus aureus (strain MSSA476)).